A 637-amino-acid chain; its full sequence is Choline O-acetyltransferase (637 aa).

Residues 1–13 are compositionally biased toward basic and acidic residues; sequence MPVSKREQSKDTG. The segment at 1–20 is disordered; the sequence is MPVSKREQSKDTGDPCALPK. His329 functions as the Proton acceptor in the catalytic mechanism. Residues 407 to 419, Ser445, and Gln545 each bind CoA; that span reads GKEF…MSPD.

This sequence belongs to the carnitine/choline acetyltransferase family.

It carries out the reaction choline + acetyl-CoA = acetylcholine + CoA. In terms of biological role, catalyzes the reversible synthesis of acetylcholine (ACh) from acetyl CoA and choline at cholinergic synapses. This chain is Choline O-acetyltransferase (chat), found in Danio rerio (Zebrafish).